Reading from the N-terminus, the 395-residue chain is Argininosuccinate synthase (395 aa).

ATP-binding positions include 6–14 (AYSGGLDTS) and Ala-33. Residue Tyr-84 participates in L-citrulline binding. Gly-114 contacts ATP. Residues Thr-116, Asn-120, and Asp-121 each contribute to the L-aspartate site. Asn-120 provides a ligand contact to L-citrulline. Residues Arg-124, Ser-173, Ser-182, Glu-258, and Tyr-270 each coordinate L-citrulline.

The protein belongs to the argininosuccinate synthase family. Type 1 subfamily. As to quaternary structure, homotetramer.

It is found in the cytoplasm. It carries out the reaction L-citrulline + L-aspartate + ATP = 2-(N(omega)-L-arginino)succinate + AMP + diphosphate + H(+). Its pathway is amino-acid biosynthesis; L-arginine biosynthesis; L-arginine from L-ornithine and carbamoyl phosphate: step 2/3. The sequence is that of Argininosuccinate synthase from Rhodococcoides fascians (Rhodococcus fascians).